Consider the following 197-residue polypeptide: Proteasome subunit beta 1 (197 aa).

Residues 1 to 6 (MNRKTG) constitute a propeptide, removed in mature form; by autocatalysis. T7 (nucleophile) is an active-site residue.

This sequence belongs to the peptidase T1B family. The 20S proteasome core is composed of 14 alpha and 14 beta subunits that assemble into four stacked heptameric rings, resulting in a barrel-shaped structure. The two inner rings, each composed of seven catalytic beta subunits, are sandwiched by two outer rings, each composed of seven alpha subunits. The catalytic chamber with the active sites is on the inside of the barrel. Has a gated structure, the ends of the cylinder being occluded by the N-termini of the alpha-subunits. Is capped at one or both ends by the proteasome regulatory ATPase, PAN.

The protein localises to the cytoplasm. It catalyses the reaction Cleavage of peptide bonds with very broad specificity.. With respect to regulation, the formation of the proteasomal ATPase PAN-20S proteasome complex, via the docking of the C-termini of PAN into the intersubunit pockets in the alpha-rings, triggers opening of the gate for substrate entry. Interconversion between the open-gate and close-gate conformations leads to a dynamic regulation of the 20S proteasome proteolysis activity. In terms of biological role, component of the proteasome core, a large protease complex with broad specificity involved in protein degradation. The polypeptide is Proteasome subunit beta 1 (Pyrococcus horikoshii (strain ATCC 700860 / DSM 12428 / JCM 9974 / NBRC 100139 / OT-3)).